The primary structure comprises 300 residues: Cation-efflux pump FieF (300 aa).

Helical transmembrane passes span 12-32, 39-59, 82-102, and 114-134; these read AAIA…FAWW, ILAA…NLLV, AALA…LTSI, and PGVG…LVTF. Zn(2+) contacts are provided by Asp45 and Asp49. His153 and Asp157 together coordinate Zn(2+). Transmembrane regions (helical) follow at residues 156–176 and 178–198; these read SDVM…YGWH and ADAL…LRMG.

It belongs to the cation diffusion facilitator (CDF) transporter (TC 2.A.4) family. FieF subfamily. In terms of assembly, homodimer.

The protein localises to the cell inner membrane. It catalyses the reaction Zn(2+)(in) + H(+)(out) = Zn(2+)(out) + H(+)(in). The enzyme catalyses Cd(2+)(in) + H(+)(out) = Cd(2+)(out) + H(+)(in). It carries out the reaction Fe(2+)(in) + H(+)(out) = Fe(2+)(out) + H(+)(in). Its function is as follows. Divalent metal cation transporter which exports Zn(2+), Cd(2+) and possibly Fe(2+). May be involved in zinc and iron detoxification by efflux. In Salmonella arizonae (strain ATCC BAA-731 / CDC346-86 / RSK2980), this protein is Cation-efflux pump FieF.